An 848-amino-acid chain; its full sequence is Phosphatidate phosphatase LPIN3 (848 aa).

The tract at residues 1–108 (MNYVGQLAET…VPPRLCTSPI (108 aa)) is N-LIP. 3 disordered regions span residues 97–233 (EDVP…SPLR), 271–298 (PEEPSPSSSPSEAGVDTLSPPVLHPGVR), and 314–373 (AVDS…NQHL). A Nuclear localization signal motif is present at residues 135-144 (GRRKRRRRRK). The span at 135-146 (GRRKRRRRRKPR) shows a compositional bias: basic residues. Residues 151–164 (DAVDSSSEELEAGA) are compositionally biased toward acidic residues. Residues Ser-155 and Ser-156 each carry the phosphoserine modification. Residues 165 to 191 (ESELTLLEKPTPESPSAQEAEEPSSQP) are compositionally biased toward low complexity. Position 218 is a phosphoserine (Ser-218). A compositionally biased stretch (low complexity) spans 271–282 (PEEPSPSSSPSE). Positions 342–358 (KSWSWTTPESHTPSGHP) are enriched in polar residues. Phosphoserine is present on Ser-460. A compositionally biased stretch (basic and acidic residues) spans 536-556 (EEHSSQREKAATRKQQGEKTE). Residues 536-568 (EEHSSQREKAATRKQQGEKTEVLSSDDDVPDSP) are disordered. A C-LIP region spans residues 587-789 (YKKSLRLSSD…RIFTVNPRGE (203 aa)). The DXDXT motif motif lies at 641–645 (DIDGT). An LXXIL motif motif is present at residues 652 to 656 (LGHIL).

This sequence belongs to the lipin family. The cofactor is Mg(2+). Significant expression in intestine and other regions of the gastrointestinal tract.

It localises to the nucleus. It carries out the reaction a 1,2-diacyl-sn-glycero-3-phosphate + H2O = a 1,2-diacyl-sn-glycerol + phosphate. With respect to regulation, inhibited by N-ethylmaleimide. Magnesium-dependent phosphatidate phosphatase enzyme which catalyzes the conversion of phosphatidic acid to diacylglycerol during triglyceride, phosphatidylcholine and phosphatidylethanolamine biosynthesis therefore regulates fatty acid metabolism. The sequence is that of Phosphatidate phosphatase LPIN3 from Mus musculus (Mouse).